The chain runs to 471 residues: Glutamate--tRNA ligase (471 aa).

Residues 9–19 carry the 'HIGH' region motif; the sequence is PSPTGYLHVGG. 4 residues coordinate Zn(2+): cysteine 98, cysteine 100, cysteine 125, and histidine 127. Residues 237–241 carry the 'KMSKS' region motif; sequence KLSKR. Lysine 240 lines the ATP pocket.

Belongs to the class-I aminoacyl-tRNA synthetase family. Glutamate--tRNA ligase type 1 subfamily. In terms of assembly, monomer. Zn(2+) is required as a cofactor.

It is found in the cytoplasm. It carries out the reaction tRNA(Glu) + L-glutamate + ATP = L-glutamyl-tRNA(Glu) + AMP + diphosphate. Its function is as follows. Catalyzes the attachment of glutamate to tRNA(Glu) in a two-step reaction: glutamate is first activated by ATP to form Glu-AMP and then transferred to the acceptor end of tRNA(Glu). This Salmonella paratyphi A (strain ATCC 9150 / SARB42) protein is Glutamate--tRNA ligase.